Here is a 491-residue protein sequence, read N- to C-terminus: Polybrominated aromatic compounds synthase (491 aa).

Cys-437 is a binding site for heme.

Belongs to the cytochrome P450 family. The cofactor is heme.

Cytochrome P450 protein involved in the biosynthesis of polybrominated aromatic organic compounds. In the presence of ferredoxin, ferredoxin reductase and NADH, catalyzes the coupling of bromophenols and bromopyrroles, forming various polybrominated biphenyls and hydroxylated polybrominated diphenyl ethers (OH-BDE). Can also mediate the heterocoupling of 3,5-dibromocatechol. Can also use chlorinated phenolic substrates. 2,3,4-tribromopyrrole could be the physiological substrate. In Pseudoalteromonas luteoviolacea (strain 2ta16), this protein is Polybrominated aromatic compounds synthase.